The primary structure comprises 393 residues: NAD(P)H-quinone oxidoreductase subunit H, chloroplastic (393 aa).

It belongs to the complex I 49 kDa subunit family. In terms of assembly, NDH is composed of at least 16 different subunits, 5 of which are encoded in the nucleus.

The protein localises to the plastid. It is found in the chloroplast thylakoid membrane. The catalysed reaction is a plastoquinone + NADH + (n+1) H(+)(in) = a plastoquinol + NAD(+) + n H(+)(out). The enzyme catalyses a plastoquinone + NADPH + (n+1) H(+)(in) = a plastoquinol + NADP(+) + n H(+)(out). Functionally, NDH shuttles electrons from NAD(P)H:plastoquinone, via FMN and iron-sulfur (Fe-S) centers, to quinones in the photosynthetic chain and possibly in a chloroplast respiratory chain. The immediate electron acceptor for the enzyme in this species is believed to be plastoquinone. Couples the redox reaction to proton translocation, and thus conserves the redox energy in a proton gradient. This chain is NAD(P)H-quinone oxidoreductase subunit H, chloroplastic, found in Calycanthus floridus var. glaucus (Eastern sweetshrub).